A 123-amino-acid chain; its full sequence is Ribosome-binding factor A (123 aa).

This sequence belongs to the RbfA family. Monomer. Binds 30S ribosomal subunits, but not 50S ribosomal subunits or 70S ribosomes.

The protein localises to the cytoplasm. One of several proteins that assist in the late maturation steps of the functional core of the 30S ribosomal subunit. Associates with free 30S ribosomal subunits (but not with 30S subunits that are part of 70S ribosomes or polysomes). Required for efficient processing of 16S rRNA. May interact with the 5'-terminal helix region of 16S rRNA. The protein is Ribosome-binding factor A of Syntrophus aciditrophicus (strain SB).